The sequence spans 508 residues: DEAD-box ATP-dependent RNA helicase 8 (508 aa).

The tract at residues 1–123 (MDPRARYPPG…LKLPPQDTRY (123 aa)) is disordered. Low complexity predominate over residues 18 to 53 (NPNYYNRGPPLQQQHNHHQQQQTSAPHHQQYVQRQP). The span at 54 to 64 (QQHHHHNHHQQ) shows a compositional bias: basic residues. The Q motif motif lies at 134 to 162 (NEFEDYFLKRELLMGIYEKGFERPSPIQE). Residues 165–335 (IPIALTGSDI…DKYLPKPYVI (171 aa)) enclose the Helicase ATP-binding domain. An ATP-binding site is contributed by 178-185 (AKNGTGKT). The short motif at 283 to 286 (DEAD) is the DEAD box element. Residues 345–505 (GITQFYAFVE…PIPPQIDQAI (161 aa)) form the Helicase C-terminal domain.

It belongs to the DEAD box helicase family. DDX6/DHH1 subfamily.

The protein localises to the cytoplasm. Its subcellular location is the P-body. It catalyses the reaction ATP + H2O = ADP + phosphate + H(+). ATP-dependent RNA helicase involved in mRNA turnover, and more specifically in mRNA decapping. This is DEAD-box ATP-dependent RNA helicase 8 from Oryza sativa subsp. japonica (Rice).